The chain runs to 141 residues: Large ribosomal subunit protein uL11 (141 aa).

This sequence belongs to the universal ribosomal protein uL11 family. In terms of assembly, part of the ribosomal stalk of the 50S ribosomal subunit. Interacts with L10 and the large rRNA to form the base of the stalk. L10 forms an elongated spine to which L12 dimers bind in a sequential fashion forming a multimeric L10(L12)X complex. Post-translationally, one or more lysine residues are methylated.

Forms part of the ribosomal stalk which helps the ribosome interact with GTP-bound translation factors. This is Large ribosomal subunit protein uL11 from Lactococcus lactis subsp. lactis (strain IL1403) (Streptococcus lactis).